The primary structure comprises 54 residues: UPF0391 membrane protein Sde_0270 (54 aa).

The next 2 helical transmembrane spans lie at I6–V26 and G29–G49.

This sequence belongs to the UPF0391 family.

The protein resides in the cell membrane. The polypeptide is UPF0391 membrane protein Sde_0270 (Saccharophagus degradans (strain 2-40 / ATCC 43961 / DSM 17024)).